A 540-amino-acid chain; its full sequence is MPAAPECRLSNHGRIMKCVTFLLLLPETLKKLKRASKHPGRLSVCYNILTLSLKKRMAAELYPVSDHATLQKSGAVMLSLPEKKRNVEPVSQTTASIATTPTTEQNINNNNVEIPSWHSAHPTLRERNALMFNNEQMADVHFIVGPPGESQRVPAHKYVLAVGSSVFCAMFYGDLAEGDSDIHIPDVEPAAFLILLKYMYSDEIELAPDTVLATLYAAKKYLVSALARACVGFLETSLEARNACVLLSQSRLFEEPELTQRCWEVIDAQAELALRSEGFSEIDLPTLESILHRETLNVKESVVFQAVLGWADAECRRQGLSPTSQNQRSVLGKALHLVRLPSMTLQEFADGAAQVDILTLEETHSIFLWYTAATKPSLGFPVNAREGLTAQRCHRFQSSAYRSNQWRYRGRCDSIQFAVDKRVFIAGLGLYGSSGGKAEYSVRIELKRQGVLLAQNLTKFVSDGSSSTFPVWFEHPVQVEQDAFYTVSAVLDGSELSYFGQEGMTEVQCGKVTFQFQCSSDSTNGTGVQGGQIPELIFYA.

The BTB domain maps to 138-208 (ADVHFIVGPP…MYSDEIELAP (71 aa)).

Interacts with cul3. Interacts (via BTB domain) with zbtb16/plzf. As to expression, expressed in the developing central nervous system.

It is found in the cytoplasm. Its subcellular location is the nucleus. In terms of biological role, adapter protein for the cul3 E3 ubiquitin-protein ligase complex. Promotes the export of zbtb16/plzf from the nucleus to the cytoplasm and targets zbtb16/plzf for ubiquitination and degradation. Up-regulates neurog1 expression and antagonizes zbtb16/plzf, to promote neurogenesis. This chain is BTB/POZ domain-containing protein 6-A (btbd6a), found in Danio rerio (Zebrafish).